Consider the following 131-residue polypeptide: Snaclec alboaggregin-A subunit alpha (131 aa).

One can recognise a C-type lectin domain in the interval 1 to 131 (DCPSDWSSYD…EYPFVCKFXR (131 aa)). Cystine bridges form between Cys-2–Cys-13, Cys-30–Cys-127, and Cys-102–Cys-119.

This sequence belongs to the snaclec family. As to quaternary structure, heterotetramer of the subunits alpha, alpha', beta and beta'; disulfide-linked. In terms of tissue distribution, expressed by the venom gland.

The protein localises to the secreted. In terms of biological role, potent platelet activator that aggregates platelets via both GPIbalpha (GP1BA) and GPVI (GP6). Induces a tyrosine phosphorylation profile in platelets that resembles this produced by collagen, involving the time dependent tyrosine phosphorylation of Fc receptor gamma chain (FCGR1A), phospholipase Cgamma2 (PLCG2), and LAT. This is Snaclec alboaggregin-A subunit alpha from Trimeresurus albolabris (White-lipped pit viper).